The primary structure comprises 279 residues: HTH-type transcriptional regulator HdfR (279 aa).

One can recognise an HTH lysR-type domain in the interval 1-58 (MDTELLKTFLEVSRTRHFGRAAESLYLTQSAVSFRIRQLENQLGVNLFTRHRNNIRLT). The segment at residues 18–37 (FGRAAESLYLTQSAVSFRIR) is a DNA-binding region (H-T-H motif).

Belongs to the LysR transcriptional regulatory family.

Functionally, negatively regulates the transcription of the flagellar master operon flhDC by binding to the upstream region of the operon. The polypeptide is HTH-type transcriptional regulator HdfR (Escherichia coli (strain SE11)).